A 148-amino-acid chain; its full sequence is U5-hexatoxin-Hi1a (148 aa).

Positions 1–21 are cleaved as a signal peptide; it reads MNFSVVAVALVVVLTVHFTDG. Positions 22–38 are excised as a propeptide; the sequence is QETSSSLPSPPSPLPGR. The interval 125–148 is disordered; the sequence is TPSTTVTTPTPTTETPTTETPSTP.

In terms of processing, contains 2 disulfide bonds. Expressed by the venom gland.

It localises to the secreted. Its function is as follows. Probable ion channel inhibitor. The chain is U5-hexatoxin-Hi1a from Hadronyche infensa (Fraser island funnel-web spider).